Reading from the N-terminus, the 673-residue chain is Centrosomal protein kizuna (673 aa).

Disordered regions lie at residues 175–207, 255–413, 432–480, 494–516, and 613–673; these read TEHK…TDSC, GSNT…ALKL, QTLS…NSVK, ECGR…ILND, and SEAS…DFYD. 2 stretches are compositionally biased toward polar residues: residues 196–207 and 255–266; these read QTAQSSNVTDSC and GSNTRHGKSNLS. Basic and acidic residues-rich tracts occupy residues 267 to 293 and 303 to 316; these read EGKK…DLKC and ILTR…EKRA. Phosphoserine is present on residues serine 317 and serine 321. Positions 331-357 are enriched in basic and acidic residues; sequence SENKWSQEKHSPWEGVSDHLAHREPKS. Threonine 379 carries the phosphothreonine; by PLK1 modification. Residues 471 to 480 are compositionally biased toward basic and acidic residues; it reads TLKEHDNSVK. Low complexity-rich tracts occupy residues 503–512 and 613–625; these read SSESSCSLPS and SEAS…GSPL. Serine 647, serine 650, and serine 652 each carry phosphoserine.

The protein belongs to the kizuna family. In terms of assembly, interacts with AKAP9, CEP72, ODF2, PCNT and TUBGCP2. In terms of processing, phosphorylation at Thr-379 by PLK1 is not needed for centrosomal localization or pericentriolar material expansion but is indispensable for spindle-pole stabilization.

The protein resides in the cytoplasm. It is found in the cytoskeleton. Its subcellular location is the microtubule organizing center. The protein localises to the centrosome. It localises to the cilium basal body. Its function is as follows. Centrosomal protein required for establishing a robust mitotic centrosome architecture that can endure the forces that converge on the centrosomes during spindle formation. Required for stabilizing the expanded pericentriolar material around the centriole. In Homo sapiens (Human), this protein is Centrosomal protein kizuna (KIZ).